A 651-amino-acid polypeptide reads, in one-letter code: DNA mismatch repair protein MutL (651 aa).

This sequence belongs to the DNA mismatch repair MutL/HexB family.

Its function is as follows. This protein is involved in the repair of mismatches in DNA. It is required for dam-dependent methyl-directed DNA mismatch repair. May act as a 'molecular matchmaker', a protein that promotes the formation of a stable complex between two or more DNA-binding proteins in an ATP-dependent manner without itself being part of a final effector complex. The protein is DNA mismatch repair protein MutL of Streptococcus mutans serotype c (strain ATCC 700610 / UA159).